Consider the following 621-residue polypeptide: MBT domain-containing protein 1 (621 aa).

The segment covering 1 to 21 (MEKTKDPADRSSRSERKRRDS) has biased composition (basic and acidic residues). The disordered stretch occupies residues 1-55 (MEKTKDPADRSSRSERKRRDSFGMFDGYDSCSEDTSSSSSSDESEEEVAPLPSSL). Residues 29-41 (DSCSEDTSSSSSS) are compositionally biased toward low complexity. The segment at 68 to 103 (PDGKSGMATCEMCGMVGVRDAFYSKTKRFCSVSCSR) adopts an FCS-type zinc-finger fold. 4 residues coordinate Zn(2+): Cys77, Cys80, Cys97, and Cys101. MBT repeat units lie at residues 164–268 (FSWG…LVPP), 276–373 (TNWK…IGHR), 374–479 (FKRT…LTPP), and 487–583 (FKWF…LQPP). A disordered region spans residues 581 to 621 (QPPAPQSNKDGQSNVSKQKKKSKSQPYKGHKKNFRKPGNRP). Basic residues predominate over residues 597–621 (KQKKKSKSQPYKGHKKNFRKPGNRP).

In terms of assembly, monomer. Component of the NuA4 histone acetyltransferase complex.

The protein resides in the nucleus. It is found in the chromosome. Chromatin reader component of the NuA4 histone acetyltransferase complex, a multiprotein complex involved in transcriptional activation of select genes principally by acetylation of nucleosomal histones H4 and H2A. The NuA4 complex plays a direct role in repair of DNA double-strand breaks (DSBs) by promoting homologous recombination (HR). MBTD1 specifically recognizes and binds monomethylated and dimethylated 'Lys-20' on histone H4 (H4K20me1 and H4K20me2, respectively). In the NuA4 complex, MBTD1 promotes recruitment of the complex to H4K20me marks by competing with TP53BP1 for binding to H4K20me. Following recruitment to H4K20me at DNA breaks, the NuA4 complex catalyzes acetylation of 'Lys-15' on histone H2A (H2AK15), blocking the ubiquitination mark required for TP53BP1 localization at DNA breaks, thereby promoting homologous recombination (HR). In Xenopus laevis (African clawed frog), this protein is MBT domain-containing protein 1.